We begin with the raw amino-acid sequence, 428 residues long: GTPase Obg (428 aa).

One can recognise an Obg domain in the interval 1–158; it reads MFVDQVKIYV…RDVILELKVL (158 aa). The OBG-type G domain occupies 159–329; it reads ADVGLVGFPS…LLFEVANLLE (171 aa). GTP contacts are provided by residues 165–172, 190–194, 212–215, 282–285, and 310–312; these read GFPSVGKS, FTTIV, DLPG, NKMD, and SAV. Residues serine 172 and threonine 192 each contribute to the Mg(2+) site. The OCT domain occupies 350–428; that stretch reads KLETEGVKFD…ILEYEFEFID (79 aa).

This sequence belongs to the TRAFAC class OBG-HflX-like GTPase superfamily. OBG GTPase family. In terms of assembly, monomer. Mg(2+) is required as a cofactor.

The protein resides in the cytoplasm. Its function is as follows. An essential GTPase which binds GTP, GDP and possibly (p)ppGpp with moderate affinity, with high nucleotide exchange rates and a fairly low GTP hydrolysis rate. Plays a role in control of the cell cycle, stress response, ribosome biogenesis and in those bacteria that undergo differentiation, in morphogenesis control. This Bacillus cereus (strain Q1) protein is GTPase Obg.